We begin with the raw amino-acid sequence, 422 residues long: Vitamin D3 receptor (422 aa).

Positions 22-90 (PRICGVCGDK…RLKRCVDIGM (69 aa)) form a DNA-binding region, nuclear receptor. The Zn(2+) site is built by Cys25, Cys28, Cys42, Cys45, Cys61, Cys67, Cys77, and Cys80. 2 NR C4-type zinc fingers span residues 25-45 (CGVC…CEGC) and 61-85 (CPFN…LKRC). The hinge stretch occupies residues 98–127 (DEEVQRKRQMINKRKSEEALKESMRPKISD). The NR LBD domain maps to 128 to 418 (EQQKMIDILL…LTPLMLEVFS (291 aa)). The interval 170–191 (RSSSVHTQGSPSEDSDVFTSSP) is disordered. Ser232 lines the calcitriol pocket. Positions 241–259 (KMIPGFRDLIAEDQIALLK) are interaction with coactivator LXXLL motif. Calcitriol is bound by residues Arg269, Ser273, His300, and His392. Positions 411 to 419 (PLMLEVFSD) match the 9aaTAD motif.

Belongs to the nuclear hormone receptor family. NR1 subfamily. Homodimer in the absence of bound vitamin D3. Heterodimer with RXRA after vitamin D3 binding. In terms of tissue distribution, detected in all tissues examined. Highest level in small intestine and skin.

The protein resides in the nucleus. The protein localises to the cytoplasm. Its function is as follows. Nuclear receptor for calcitriol, the active form of vitamin D3 which mediates the action of this vitamin on cells. Enters the nucleus upon vitamin D3 binding where it forms heterodimers with the retinoid X receptor/RXR. The VDR-RXR heterodimers bind to specific response elements on DNA and activate the transcription of vitamin D3-responsive target genes. Plays a central role in calcium homeostasis. Also functions as a receptor for the secondary bile acid lithocholic acid (LCA) and its metabolites. In Xenopus laevis (African clawed frog), this protein is Vitamin D3 receptor (vdr).